The sequence spans 240 residues: UDP-2,3-diacylglucosamine hydrolase (240 aa).

Mn(2+)-binding residues include D7, H9, D40, N78, and H113. Residue 78–79 (NR) coordinates substrate. 5 residues coordinate substrate: D121, S159, T163, K166, and H194. The Mn(2+) site is built by H194 and H196.

It belongs to the LpxH family. It depends on Mn(2+) as a cofactor.

It is found in the cell inner membrane. The enzyme catalyses UDP-2-N,3-O-bis[(3R)-3-hydroxytetradecanoyl]-alpha-D-glucosamine + H2O = 2-N,3-O-bis[(3R)-3-hydroxytetradecanoyl]-alpha-D-glucosaminyl 1-phosphate + UMP + 2 H(+). It functions in the pathway glycolipid biosynthesis; lipid IV(A) biosynthesis; lipid IV(A) from (3R)-3-hydroxytetradecanoyl-[acyl-carrier-protein] and UDP-N-acetyl-alpha-D-glucosamine: step 4/6. Its function is as follows. Hydrolyzes the pyrophosphate bond of UDP-2,3-diacylglucosamine to yield 2,3-diacylglucosamine 1-phosphate (lipid X) and UMP by catalyzing the attack of water at the alpha-P atom. Involved in the biosynthesis of lipid A, a phosphorylated glycolipid that anchors the lipopolysaccharide to the outer membrane of the cell. In Pseudomonas putida (strain W619), this protein is UDP-2,3-diacylglucosamine hydrolase.